The following is a 248-amino-acid chain: Probable transcriptional regulatory protein Pfl01_4410 (248 aa).

Belongs to the TACO1 family.

It localises to the cytoplasm. The sequence is that of Probable transcriptional regulatory protein Pfl01_4410 from Pseudomonas fluorescens (strain Pf0-1).